An 894-amino-acid polypeptide reads, in one-letter code: Genome polyprotein 2 (894 aa).

Residues 109 to 229 (TAEFKSGFCY…GCEYMLYPVG (121 aa)) enclose the Peptidase C6 domain. Active-site for helper component proteinase activity residues include Cys117 and His189. The segment at 502-539 (WVSLDSGDEDDDHSGGGGGSPQTPGGQPPASPAPGTHQ) is disordered.

It belongs to the bymoviruses polyprotein 2 family. In terms of processing, the viral RNA2 of bymoviruses is expressed as a single polyprotein which undergoes post-translational proteolytic processing resulting in the production of at least two individual proteins. The HC-pro cleaves its C-terminus autocatalytically (Potential).

It carries out the reaction Hydrolyzes a Gly-|-Gly bond at its own C-terminus, commonly in the sequence -Tyr-Xaa-Val-Gly-|-Gly, in the processing of the potyviral polyprotein.. The chain is Genome polyprotein 2 (RNA2) from Hordeum vulgare (Barley).